The primary structure comprises 551 residues: Translocated intimin receptor Tir (551 aa).

2 stretches are compositionally biased toward low complexity: residues 1–15 and 212–229; these read MPIGNLGNNVNSNNL and DDSVVSETRTSSTASSVR. 2 disordered regions span residues 1 to 36 and 186 to 229; these read MPIGNLGNNVNSNNLIPPAPPLPSQTDGASRGGAGQ and DPNN…SSVR. Topologically, residues 1 to 233 are cytoplasmic; that stretch reads MPIGNLGNNV…TASSVRSDPK (233 aa). The helical transmembrane segment at 234 to 254 threads the bilayer; the sequence is FWVSIGAIAAGLAGLAATGIT. The Extracellular portion of the chain corresponds to 255-362; that stretch reads QALALTPEPD…RRQEELELSS (108 aa). The disordered stretch occupies residues 259-311; it reads LTPEPDDPTTTDPEQAASAAESATRDQLTQEAFKNPENQKVSIDEIGNSIPSG. Over residues 283 to 299 the composition is skewed to polar residues; it reads RDQLTQEAFKNPENQKV. A helical transmembrane segment spans residues 363-383; the sequence is GIGYSLSSALIVGGGIGAGVT. The Cytoplasmic portion of the chain corresponds to 384-551; it reads TALHRRNQPA…APTPGPGRFV (168 aa). The segment at 389 to 450 is disordered; sequence RNQPAEQTTT…THWSDTSSAV (62 aa). The span at 395–409 shows a compositional bias: low complexity; sequence QTTTTTTHTVVQQQT. Positions 422 to 435 are enriched in basic and acidic residues; the sequence is IRAEDTSLNRRDSQ. Residues 436-450 show a composition bias toward polar residues; sequence RSTASTHWSDTSSAV. An Essential for actin pedestal formation motif is present at residues 452–454; sequence NPY.

The protein belongs to the Tir receptor family. As to quaternary structure, interacts with intimin and host proteins. Phosphorylated by host kinases.

The protein localises to the secreted. Its subcellular location is the host cell membrane. In terms of biological role, multifunctional protein that is required for efficient pedestal formation in host epithelial cells during infection. The extracellular region acts as a receptor for bacterial intimin, allowing the bacterium to attach tightly to the host-cell surface. Simultaneously, the intracellular region initiates a signaling cascade in the host cell, which leads to actin polymerization and formation of actin pedestals at the sites of bacterial adhesion. The polypeptide is Translocated intimin receptor Tir (tir) (Escherichia coli O111:H- (strain 11128 / EHEC)).